The sequence spans 252 residues: 3-deoxy-manno-octulosonate cytidylyltransferase (252 aa).

This sequence belongs to the KdsB family.

The protein resides in the cytoplasm. The catalysed reaction is 3-deoxy-alpha-D-manno-oct-2-ulosonate + CTP = CMP-3-deoxy-beta-D-manno-octulosonate + diphosphate. It participates in nucleotide-sugar biosynthesis; CMP-3-deoxy-D-manno-octulosonate biosynthesis; CMP-3-deoxy-D-manno-octulosonate from 3-deoxy-D-manno-octulosonate and CTP: step 1/1. Its pathway is bacterial outer membrane biogenesis; lipopolysaccharide biosynthesis. In terms of biological role, activates KDO (a required 8-carbon sugar) for incorporation into bacterial lipopolysaccharide in Gram-negative bacteria. The chain is 3-deoxy-manno-octulosonate cytidylyltransferase from Phocaeicola vulgatus (strain ATCC 8482 / DSM 1447 / JCM 5826 / CCUG 4940 / NBRC 14291 / NCTC 11154) (Bacteroides vulgatus).